Consider the following 487-residue polypeptide: Cell wall protein TIR4 (487 aa).

Positions 1-22 are cleaved as a signal peptide; sequence MAYSKITLLAALAAIAYAQTQA. 11 tandem repeats follow at residues 137–148, 149–160, 161–172, 173–184, 185–196, 197–208, 209–220, 221–232, 233–244, 245–256, and 257–268. The 11 X 12 AA approximate tandem repeats, Ser-rich stretch occupies residues 137–268; it reads SSSVAPSSSE…SVASSTSEAT (132 aa). Positions 206–299 are disordered; the sequence is EVASSSVAPS…SVSSSSAVSS (94 aa). N-linked (GlcNAc...) asparagine glycosylation is found at N327, N348, N368, N403, and N404. N465 carries GPI-anchor amidated asparagine lipidation. Positions 466-487 are cleaved as a propeptide — removed in mature form; that stretch reads GAAKAVIGMGAGALAAVAAMLL.

Belongs to the SRP1/TIP1 family. Post-translationally, the GPI-anchor is attached to the protein in the endoplasmic reticulum and serves to target the protein to the cell surface. There, the glucosamine-inositol phospholipid moiety is cleaved off and the GPI-modified mannoprotein is covalently attached via its lipidless GPI glycan remnant to the 1,6-beta-glucan of the outer cell wall layer.

The protein localises to the secreted. It localises to the cell wall. The protein resides in the membrane. Functionally, component of the cell wall. Required for anaerobic growth. This chain is Cell wall protein TIR4 (TIR4), found in Saccharomyces cerevisiae (strain ATCC 204508 / S288c) (Baker's yeast).